A 170-amino-acid polypeptide reads, in one-letter code: uncharacterized protein (170 aa).

The stretch at 15–81 (EAFDEKAEKE…EREKSKSAVS (67 aa)) forms a coiled coil. Residues 20–77 (KAEKEKVEKEKALKEKTEKEKAEKEKAEKEKVEKEKAEKEKAAKEKAAKEKAEREKSK) show a composition bias toward basic and acidic residues. Positions 20–95 (KAEKEKVEKE…NQNSNKGNVE (76 aa)) are disordered. A compositionally biased stretch (polar residues) spans 78–92 (SAVSPATTNQNSNKG). The chain crosses the membrane as a helical span at residues 98–118 (VAIGVLAGGAVTGVAVGGAYL).

The protein localises to the membrane. This is an uncharacterized protein from Dictyostelium discoideum (Social amoeba).